We begin with the raw amino-acid sequence, 2292 residues long: MKGHQFKSWIFELREILREIKNSHYFLDSWTQLNSVVSFIHIFFHQERFIKLLDSRIWSILLSRNSHLQGSTSNRYLTIKGVVLFVVSVLIYRINNRKMVERKNLYLTGLLPIPMNFIGPRNDTLEESFGSSNINRLIVSLLYLPKGKKISESCFLDPKESTWVLPITKKCIMPESNWGSRWWRNWLGKKRDSSCKISNETVTGIEISFKEKDIKYLEFLFVYYMDDPIRKDHDWELFDRLSPRKRRNIINLNSGQLFEILVKDWICYLMFAFREKIPIEAEGFFKQQGAGSTIQSNDIEHVSHLFSRNKWAISLQNCAQFHMWQFRQDLFFSWGKNPHESDFLRNISRENWIWLDNVWLENKDRFFSKVRNVSSNIQYDSTRSSFVQVTDFSQLKGSSDRSRDHFDSIRNEDSEYHTLINQREIQQLKERSILWDPSFLQMERTEIESDRSPKCLSGYSSMSRLFTEREKQMNNHLLPEEIEEFLVLGNRTRSIRSFFSDRWSELHLGSNPTERSTRDHKLLKKEQDVSFVPSRRSENKEIVNIFKIITYLQNTVSIHPISSDPGCDMVPKDELDMDSSNKISFLNKNPFFDLFHLFHDRNRGGYTLHHDFESEERFQEMADLFTLSITEPDLVYHKGFALSIDSYRLDQKQFLNEVFNSRDESKKKSLLVLPPIFYEENESFYRRIRKKWVRTSCGNDLEDPKPKIVVFASNNIMEAVNQYRLIRNLIQIQYSTYGYIRNVLNRFLLMNRSDRNFEYGIQRDQIGNDTLNHRTIMKYTINQHLSNLKKSQKKWFDPLIFISRTERSMNRDPNAYRYKWSNGSKNLQEHLEHFISEQKSRFQVVFDRLRINQYSIDWSEVIDKKDLSKSLPFFLSKLLLFLSKFLLFLSNSLPFFFVSFGNIPIHRSEIHIYELKGPNDQLCNQLLESIGLQIVHLKKLKPFLLDDHDTSQKSKFLINGGTISPFLFNKIPKWMIDSFHTRKNRRKSFDNTDSYFSMISHDQDNWLNPVKPFHRSSLISSFYKANRLRFLNNPHHFCFYCNKRFPFYVEKARINNYDFTYGQFLNILFIRNKIFSLRGGKKKYAFLERDTISPIELQVSNIFIPNDFPQNGDERYNFYKSFHFPIRSDPFVRRAIYSIADISGTLLTEGQIVNFERTYCQPLSDMNLSDSEGKNLHQYLNFNSNMGLIHTPCSEKYLPSEKRKKRGLCLKKCLEKGQMYRTFQRDSAFSTLSKWNIFQTYMPWFLTSTGYNYLNLLFLDTFSDLLPILSSSQKFVSIFHDIMHGLDISWRILQKRLCLPQWNLISEISSKCLHNLLLSKEMIHRNNESPLISTHLRSPNVREFLYSILFLLLVAGYLVRTHLLFVSRTYSELQTEFERVKSLMIPSYMIELRKLLDRYPTSELNSFWLKNLFLVAREQLGDSLEEIRGSASGGNMLWGGGPTYGVKSIRSKKKYLNINLIDIIDFISIIPNPINRIAFSRNTRHLSHISKETYSLIRKRKKVNGDWIDDKIESWVSNSDSVDDKEREFLVQFSTLTTEKRIDQILLSLTQSDHLSKNDSGYQMIEQPGAIYLRYLVDIHKKYLMNYEFNTSCLAERRIFLAHYQTITYSQTSCGANSFHFPSHGKPFSLRLALSLSRGILVIGSIGTGRSYLVKYLATNSYVPFITVFLNKFLDNKPKGFLIDDSDDIDDSDDIDRDLDTELELLTMMNALTMDMMPEIDRFYITLQFELAKAMSPCIIWIPNIHDLDVNESNYLSLGLLVNYLSRDCERCSTRNILVIASTHIPQKVDPALIAPNKLNTCIKIRRLLIPQQRKHFFTLSYTRGFHLEKKMFHTNGFGSITMGSNVRDLVALTNEALSISITQKKSIIDTNIIRSAFHRQTWDLRSQVRSVQDHGILFYQIGRAVAQNVLLSNCSIDPISIYMKKKSCNEGDSYLYKWYFELGTSMKKLTILLYLLSCSAGSVAQDLWSLPELDEKNGITSYGLVENDSDLVHGLLEVEGTLVGSSRTEKDCSQFDNDRATLLLRPEPRNPLDMMQNGSCSIVDQRFLYEQYKSEFEEGEGEGVLDPQRIEEDLFNHIVWAPRIWRPWGFLFDCIESPNELGFPYWARSFRGKRIIYDEEDGLQENDSEFLQSGTMQYQTRDRSSKEQGFFRISQFIWDPADPLFFLFKDQPFVSVFSHREFFADEEMSKGLLTSQTDLPTSIYKRWFIKNTQEKYFELLIYRQRWLRTNSSLSNGFFRSNTPSESYQYLSKLFLSNGTLLDQMTKTLLRKRWLFPDEMVLAICYNNESLV.

ATP is bound at residue 1644 to 1651; the sequence is GSIGTGRS.

This sequence belongs to the Ycf2 family.

Its subcellular location is the plastid. The protein resides in the chloroplast stroma. Its function is as follows. Probable ATPase of unknown function. Its presence in a non-photosynthetic plant (Epifagus virginiana) and experiments in tobacco indicate that it has an essential function which is probably not related to photosynthesis. In Morus indica (Mulberry), this protein is Protein Ycf2.